Here is a 473-residue protein sequence, read N- to C-terminus: MKTLYSLRRFYHVETLFNGTLALTGRDQETTGFAWWAGNARLINLSGKLLGAHVAHAGLIVFWAGAMNLFEVAHFVPEKPMYEQGLILLPHLATLGWGVGPGGEVIDTFPYFVSGVLHLISSAVLGFGGIYHALLGPETLEESFPFFGYVWKDRNKMTTILGIHLILLGIGAFLLVFKALYFGGIYDTWAPGGGDVRKITNLTLSPSIIFGYLLKSPFGGEGWIVSVDDLEDIIGGHVWLGSICILGGIWHILTKPFAWARRALVWSGEAYLSYSLGALSVFGFIACCFVWFNNTAYPSEFYGPTGPEASQAQAFTFLVRDQRLGANVGSAQGPTGLGKYLMRSPTGEVIFGGETMRFWDLRAPWLEPLRGPNGLDLSRLKKDIQPWQERRSAEYMTHAPLGSLNSVGGVATEINAVNYVSPRSWLATSHFVLGFFLFVGHLWHAGRARAAAAGFEKGIDRDFEPVLSMTPLN.

Positions 1-14 are excised as a propeptide; the sequence is MKTLYSLRRFYHVE. At threonine 15 the chain carries N-acetylthreonine. Threonine 15 is modified (phosphothreonine). Transmembrane regions (helical) follow at residues 69–93, 134–155, 178–200, 255–275, and 291–312; these read LFEV…PHLA, LLGP…KDRN, KALY…RKIT, KPFA…LSYS, and WFNN…ASQA. Glutamate 367 is a binding site for [CaMn4O5] cluster. Residues 447 to 471 form a helical membrane-spanning segment; sequence RARAAAAGFEKGIDRDFEPVLSMTP.

Belongs to the PsbB/PsbC family. PsbC subfamily. In terms of assembly, PSII is composed of 1 copy each of membrane proteins PsbA, PsbB, PsbC, PsbD, PsbE, PsbF, PsbH, PsbI, PsbJ, PsbK, PsbL, PsbM, PsbT, PsbX, PsbY, PsbZ, Psb30/Ycf12, at least 3 peripheral proteins of the oxygen-evolving complex and a large number of cofactors. It forms dimeric complexes. The cofactor is Binds multiple chlorophylls and provides some of the ligands for the Ca-4Mn-5O cluster of the oxygen-evolving complex. It may also provide a ligand for a Cl- that is required for oxygen evolution. PSII binds additional chlorophylls, carotenoids and specific lipids..

The protein resides in the plastid. The protein localises to the chloroplast thylakoid membrane. One of the components of the core complex of photosystem II (PSII). It binds chlorophyll and helps catalyze the primary light-induced photochemical processes of PSII. PSII is a light-driven water:plastoquinone oxidoreductase, using light energy to abstract electrons from H(2)O, generating O(2) and a proton gradient subsequently used for ATP formation. This is Photosystem II CP43 reaction center protein from Glycine max (Soybean).